The sequence spans 180 residues: Oligoribonuclease (180 aa).

One can recognise an Exonuclease domain in the interval Leu7 to Leu170. Tyr128 is a catalytic residue.

Belongs to the oligoribonuclease family.

Its subcellular location is the cytoplasm. Its function is as follows. 3'-to-5' exoribonuclease specific for small oligoribonucleotides. The protein is Oligoribonuclease of Pseudomonas putida (strain ATCC 700007 / DSM 6899 / JCM 31910 / BCRC 17059 / LMG 24140 / F1).